The chain runs to 477 residues: Ribulose bisphosphate carboxylase large chain (477 aa).

The propeptide occupies 1–2; that stretch reads MS. P3 is modified (N-acetylproline). Residue K14 is modified to N6,N6,N6-trimethyllysine. Residue T173 participates in substrate binding. K175 functions as the Proton acceptor in the catalytic mechanism. K177 contacts substrate. The Mg(2+) site is built by K201, D203, and E204. K201 carries the N6-carboxylysine modification. The active-site Proton acceptor is the H294. The substrate site is built by R295, H327, and S379.

This sequence belongs to the RuBisCO large chain family. Type I subfamily. Heterohexadecamer of 8 large chains and 8 small chains; disulfide-linked. The disulfide link is formed within the large subunit homodimers. Mg(2+) is required as a cofactor. The disulfide bond which can form in the large chain dimeric partners within the hexadecamer appears to be associated with oxidative stress and protein turnover.

The protein localises to the plastid. Its subcellular location is the chloroplast. The enzyme catalyses 2 (2R)-3-phosphoglycerate + 2 H(+) = D-ribulose 1,5-bisphosphate + CO2 + H2O. It carries out the reaction D-ribulose 1,5-bisphosphate + O2 = 2-phosphoglycolate + (2R)-3-phosphoglycerate + 2 H(+). Functionally, ruBisCO catalyzes two reactions: the carboxylation of D-ribulose 1,5-bisphosphate, the primary event in carbon dioxide fixation, as well as the oxidative fragmentation of the pentose substrate in the photorespiration process. Both reactions occur simultaneously and in competition at the same active site. The polypeptide is Ribulose bisphosphate carboxylase large chain (Gerbera jamesonii (Transvaal daisy)).